A 198-amino-acid chain; its full sequence is uncharacterized protein (198 aa).

The disordered stretch occupies residues 40–111 (GSALPPQAPT…LSRGAGQGAP (72 aa)). Over residues 60–74 (SSRTPGPRPPRSTLR) the composition is skewed to low complexity.

This is an uncharacterized protein from Homo sapiens (Human).